The following is a 93-amino-acid chain: Putative pterin-4-alpha-carbinolamine dehydratase (93 aa).

The protein belongs to the pterin-4-alpha-carbinolamine dehydratase family.

It catalyses the reaction (4aS,6R)-4a-hydroxy-L-erythro-5,6,7,8-tetrahydrobiopterin = (6R)-L-erythro-6,7-dihydrobiopterin + H2O. In Roseiflexus sp. (strain RS-1), this protein is Putative pterin-4-alpha-carbinolamine dehydratase.